We begin with the raw amino-acid sequence, 354 residues long: Putrescine/cadaverine-binding protein (354 aa).

Residues 1–20 form the signal peptide; it reads MMKKLLLVATLMAGAAQATA.

Belongs to the bacterial solute-binding protein 1 family.

It localises to the periplasm. Functionally, binds putrescine and cadaverine. The sequence is that of Putrescine/cadaverine-binding protein from Pseudomonas aeruginosa (strain ATCC 15692 / DSM 22644 / CIP 104116 / JCM 14847 / LMG 12228 / 1C / PRS 101 / PAO1).